Consider the following 122-residue polypeptide: Large ribosomal subunit protein uL14c (122 aa).

This sequence belongs to the universal ribosomal protein uL14 family. As to quaternary structure, part of the 50S ribosomal subunit.

It is found in the plastid. The protein resides in the chloroplast. Functionally, binds to 23S rRNA. The polypeptide is Large ribosomal subunit protein uL14c (Acorus calamus (Sweet flag)).